Consider the following 336-residue polypeptide: Biotin synthase (336 aa).

The Radical SAM core domain occupies 54–281 (NAIQLSTLLS…KAMVRLSAGR (228 aa)). Residues C69, C73, and C76 each contribute to the [4Fe-4S] cluster site. C113, C144, C204, and R276 together coordinate [2Fe-2S] cluster.

This sequence belongs to the radical SAM superfamily. Biotin synthase family. In terms of assembly, homodimer. [4Fe-4S] cluster serves as cofactor. The cofactor is [2Fe-2S] cluster.

It catalyses the reaction (4R,5S)-dethiobiotin + (sulfur carrier)-SH + 2 reduced [2Fe-2S]-[ferredoxin] + 2 S-adenosyl-L-methionine = (sulfur carrier)-H + biotin + 2 5'-deoxyadenosine + 2 L-methionine + 2 oxidized [2Fe-2S]-[ferredoxin]. The protein operates within cofactor biosynthesis; biotin biosynthesis; biotin from 7,8-diaminononanoate: step 2/2. Functionally, catalyzes the conversion of dethiobiotin (DTB) to biotin by the insertion of a sulfur atom into dethiobiotin via a radical-based mechanism. The protein is Biotin synthase of Burkholderia thailandensis (strain ATCC 700388 / DSM 13276 / CCUG 48851 / CIP 106301 / E264).